The sequence spans 422 residues: Adhesin YadA (422 aa).

The N-terminal stretch at 1–25 is a signal peptide; sequence MTKDFKISVSAALISALFSSPYAFA. The segment at 26 to 330 is surface exposed passenger domain; that stretch reads NNDEVHFTAV…KKAIRESNQY (305 aa). A coiled-coil region spans residues 206 to 236; it reads VNVAQLKKEIEKTQVNANKKSAEVLGIANNY. Positions 331 to 368 are outer membrane translocation of the passenger domain; the sequence is TDHKFRQLDNRLDKLDTRVDKGLASSAALNSLFQPYGV. The next 4 membrane-spanning stretches (beta stranded) occupy residues 369–379, 383–394, 401–407, and 411–422; these read GKVNFTAGVGG, SQALAIGSGYRV, KAGVAYA, and DVMYNASFNIEW. Residues 369 to 422 form a translocator domain region; it reads GKVNFTAGVGGYRSSQALAIGSGYRVNESVALKAGVAYAGSSDVMYNASFNIEW.

Belongs to the autotransporter-2 (AT-2) (TC 1.B.40) family. As to quaternary structure, homotrimer; trimers are very stable, not disrupted by heating at 95 degrees Celsius for 10 minutes in SDS sample buffer.

It is found in the cell surface. The protein resides in the cell outer membrane. Collagen-binding outer membrane protein forming a fibrillar matrix on the bacterial cell surface and phagocytosis resistance. Promotes initial attachment and invasion of eukaryotic cells. Also protects the bacteria by being responsible for agglutination, serum resistance and complement inactivation. Gly-389 plays an important role in this protein; replacing it with increasingly large polar residues decreases expression levels and trimer stability. Residues larger than Ser (Thr, Asn or His) significantly decrease serume resistance and bacterial autoagglution without affecting adhesion to host cells or host cell cytokine production. The polypeptide is Adhesin YadA (Yersinia enterocolitica serotype O:8 / biotype 1B (strain NCTC 13174 / 8081)).